We begin with the raw amino-acid sequence, 195 residues long: Probable GTP-binding protein EngB (195 aa).

In terms of domain architecture, EngB-type G spans 24 to 195 (GLTEVALSGR…EIWNFIETYI (172 aa)). Residues 32-39 (GRSNVGKS), 59-63 (GKTQT), 77-80 (DVPG), 144-147 (TKED), and 176-178 (YSS) each bind GTP. Mg(2+) contacts are provided by Ser-39 and Thr-61.

Belongs to the TRAFAC class TrmE-Era-EngA-EngB-Septin-like GTPase superfamily. EngB GTPase family. Mg(2+) serves as cofactor.

Its function is as follows. Necessary for normal cell division and for the maintenance of normal septation. This Staphylococcus epidermidis (strain ATCC 35984 / DSM 28319 / BCRC 17069 / CCUG 31568 / BM 3577 / RP62A) protein is Probable GTP-binding protein EngB.